The sequence spans 701 residues: Elongation factor G 1 (701 aa).

Residues 13-288 (KYTRNIGIMA…GVIDYLPSPL (276 aa)) form the tr-type G domain. Residues 22 to 29 (AHIDAGKT), 86 to 90 (DTPGH), and 140 to 143 (NKMD) contribute to the GTP site.

The protein belongs to the TRAFAC class translation factor GTPase superfamily. Classic translation factor GTPase family. EF-G/EF-2 subfamily.

The protein localises to the cytoplasm. In terms of biological role, catalyzes the GTP-dependent ribosomal translocation step during translation elongation. During this step, the ribosome changes from the pre-translocational (PRE) to the post-translocational (POST) state as the newly formed A-site-bound peptidyl-tRNA and P-site-bound deacylated tRNA move to the P and E sites, respectively. Catalyzes the coordinated movement of the two tRNA molecules, the mRNA and conformational changes in the ribosome. This is Elongation factor G 1 from Bdellovibrio bacteriovorus (strain ATCC 15356 / DSM 50701 / NCIMB 9529 / HD100).